Reading from the N-terminus, the 710-residue chain is Probable threonine--tRNA ligase 1, cytoplasmic (710 aa).

Positions 1–35 (MSDSQENKPVETPTEVKPVAEKKPAAEKKEKKPAV) are disordered. Positions 18–33 (PVAEKKPAAEKKEKKP) are enriched in basic and acidic residues. One can recognise a TGS domain in the interval 72 to 137 (KEEPINVTLP…EADCNLQLCK (66 aa)).

Belongs to the class-II aminoacyl-tRNA synthetase family.

It localises to the cytoplasm. It carries out the reaction tRNA(Thr) + L-threonine + ATP = L-threonyl-tRNA(Thr) + AMP + diphosphate + H(+). The sequence is that of Probable threonine--tRNA ligase 1, cytoplasmic (thrS1) from Dictyostelium discoideum (Social amoeba).